We begin with the raw amino-acid sequence, 697 residues long: Elongation factor G (697 aa).

Residues 8–283 form the tr-type G domain; sequence ERMRNIGIAA…AVVDYLPSPL (276 aa). GTP contacts are provided by residues 17-24, 81-85, and 135-138; these read AHIDAGKT, DTPGH, and NKMD.

It belongs to the TRAFAC class translation factor GTPase superfamily. Classic translation factor GTPase family. EF-G/EF-2 subfamily.

The protein localises to the cytoplasm. Catalyzes the GTP-dependent ribosomal translocation step during translation elongation. During this step, the ribosome changes from the pre-translocational (PRE) to the post-translocational (POST) state as the newly formed A-site-bound peptidyl-tRNA and P-site-bound deacylated tRNA move to the P and E sites, respectively. Catalyzes the coordinated movement of the two tRNA molecules, the mRNA and conformational changes in the ribosome. This chain is Elongation factor G, found in Solibacter usitatus (strain Ellin6076).